Consider the following 498-residue polypeptide: Ammonium transporter 1 member 1 (498 aa).

11 helical membrane-spanning segments follow: residues Leu-39–Gly-59, Val-74–Gly-94, Phe-120–Ala-140, Tyr-148–Trp-168, Phe-192–Ile-212, Leu-236–Phe-256, Ser-274–Phe-296, Val-307–Val-327, Trp-331–Ala-351, Leu-360–Phe-380, and Val-411–Gly-431.

It belongs to the ammonia transporter channel (TC 1.A.11.2) family. As to expression, expressed in roots and shoots.

The protein resides in the membrane. Functionally, ammonium transporter probably involved in ammonium uptake from the soil. In Oryza sativa subsp. japonica (Rice), this protein is Ammonium transporter 1 member 1 (AMT1-1).